The following is a 458-amino-acid chain: Exodeoxyribonuclease 7 large subunit (458 aa).

Belongs to the XseA family. As to quaternary structure, heterooligomer composed of large and small subunits.

The protein resides in the cytoplasm. The enzyme catalyses Exonucleolytic cleavage in either 5'- to 3'- or 3'- to 5'-direction to yield nucleoside 5'-phosphates.. Bidirectionally degrades single-stranded DNA into large acid-insoluble oligonucleotides, which are then degraded further into small acid-soluble oligonucleotides. The protein is Exodeoxyribonuclease 7 large subunit of Yersinia pseudotuberculosis serotype O:1b (strain IP 31758).